A 219-amino-acid chain; its full sequence is MAAAVSAKLVKDLRDKTGAGMMDCKKALAATDGDADKAIEWLRQKGIASAEKKSGRTAAEGAIGSYIHTGARVGVLIEINCETDFVARGDMFQELLRDVSMQVAACPGVEYVNTDDIPSEIREREKAIEMGRDDLDGKPEQMKEKIVEGRINKRLKELALMEQPFIKDSSLTVAELVKQTAGKIGENVKVRRFTRYTLGEGIEVEENDFAAEVASMTKG.

An involved in Mg(2+) ion dislocation from EF-Tu region spans residues 83–86 (TDFV).

The protein belongs to the EF-Ts family.

It localises to the cytoplasm. Functionally, associates with the EF-Tu.GDP complex and induces the exchange of GDP to GTP. It remains bound to the aminoacyl-tRNA.EF-Tu.GTP complex up to the GTP hydrolysis stage on the ribosome. This is Elongation factor Ts from Synechococcus sp. (strain WH7803).